The primary structure comprises 334 residues: PDZ domain-containing protein MAGIX (334 aa).

2 stretches are compositionally biased toward basic and acidic residues: residues 1 to 13 (MEPR…DPRG) and 209 to 224 (LETH…EPRK). Disordered stretches follow at residues 1-26 (MEPR…LAGP) and 209-306 (LETH…WLVP). One can recognise a PDZ domain in the interval 125 to 209 (SVELVRGYAG…QLHLVIRRPL (85 aa)). Residues 244–260 (GSRSSSTSLVQHPPSRT) show a composition bias toward polar residues. Ser-272 bears the Phosphoserine mark.

In Homo sapiens (Human), this protein is PDZ domain-containing protein MAGIX (MAGIX).